A 370-amino-acid chain; its full sequence is MVSQRLEELAAEFGLVERALGDPAMLADPREYARLTRRHRELTPIVTLYREHAVLSSDLEGARELLADPDMRELAQGEIESLSARLAQIEAELEVLLLPTDPDDAKNVILELRAGAGGAEAALFAVDLLRMYTRYAEGAGLKLNVLDASESDLGGASKVVAEVTGEFAFRAFKWERGVHRVQRVPATESQGRIHTSTVTVAVLPEAEQGEVSVDPSEVRIDVFRSQGAGGQGVNTTDSAVRAVYRPGTPDEIVVVCQDSRSQIKNREKALVVLASRLAERERAAREERERETRAAQVGTGERSEKIRTYNYPQNRVTDHRLEGDAKNFALDSVMAGGLAPIVAALSRDERERQLLELQGAEGERGTYGAA.

Gln-231 carries the post-translational modification N5-methylglutamine. Basic and acidic residues predominate over residues 284–293; the sequence is AREERERETR. The interval 284–303 is disordered; it reads AREERERETRAAQVGTGERS.

The protein belongs to the prokaryotic/mitochondrial release factor family. Methylated by PrmC. Methylation increases the termination efficiency of RF1.

It localises to the cytoplasm. Its function is as follows. Peptide chain release factor 1 directs the termination of translation in response to the peptide chain termination codons UAG and UAA. In Deinococcus geothermalis (strain DSM 11300 / CIP 105573 / AG-3a), this protein is Peptide chain release factor 1.